We begin with the raw amino-acid sequence, 313 residues long: 1-phosphofructokinase (313 aa).

Residues 222 to 227 and 254 to 255 each bind ATP; these read SMGAKG and GD. Asp-255 (proton acceptor) is an active-site residue.

This sequence belongs to the carbohydrate kinase PfkB family.

It carries out the reaction beta-D-fructose 1-phosphate + ATP = beta-D-fructose 1,6-bisphosphate + ADP + H(+). Functionally, catalyzes the ATP-dependent phosphorylation of fructose-l-phosphate to fructose-l,6-bisphosphate. The protein is 1-phosphofructokinase (fruK) of Haemophilus influenzae (strain ATCC 51907 / DSM 11121 / KW20 / Rd).